A 259-amino-acid chain; its full sequence is 4-hydroxy-tetrahydrodipicolinate reductase (259 aa).

NAD(+) is bound by residues 8 to 13 (GFKGRM), 93 to 95 (GTT), and 119 to 122 (APNF). The Proton donor/acceptor role is filled by His149. Residue His150 coordinates (S)-2,3,4,5-tetrahydrodipicolinate. The Proton donor role is filled by Lys153. 159–160 (GT) is a binding site for (S)-2,3,4,5-tetrahydrodipicolinate.

It belongs to the DapB family.

Its subcellular location is the cytoplasm. The catalysed reaction is (S)-2,3,4,5-tetrahydrodipicolinate + NAD(+) + H2O = (2S,4S)-4-hydroxy-2,3,4,5-tetrahydrodipicolinate + NADH + H(+). The enzyme catalyses (S)-2,3,4,5-tetrahydrodipicolinate + NADP(+) + H2O = (2S,4S)-4-hydroxy-2,3,4,5-tetrahydrodipicolinate + NADPH + H(+). Its pathway is amino-acid biosynthesis; L-lysine biosynthesis via DAP pathway; (S)-tetrahydrodipicolinate from L-aspartate: step 4/4. Catalyzes the conversion of 4-hydroxy-tetrahydrodipicolinate (HTPA) to tetrahydrodipicolinate. The sequence is that of 4-hydroxy-tetrahydrodipicolinate reductase from Enterococcus faecalis (strain ATCC 700802 / V583).